The sequence spans 293 residues: Ribosomal protein L11 methyltransferase (293 aa).

S-adenosyl-L-methionine is bound by residues Thr145, Gly166, Asp188, and Asn230.

This sequence belongs to the methyltransferase superfamily. PrmA family.

It is found in the cytoplasm. The catalysed reaction is L-lysyl-[protein] + 3 S-adenosyl-L-methionine = N(6),N(6),N(6)-trimethyl-L-lysyl-[protein] + 3 S-adenosyl-L-homocysteine + 3 H(+). In terms of biological role, methylates ribosomal protein L11. The chain is Ribosomal protein L11 methyltransferase from Actinobacillus succinogenes (strain ATCC 55618 / DSM 22257 / CCUG 43843 / 130Z).